Here is a 356-residue protein sequence, read N- to C-terminus: Probable arabinogalactan endo-beta-1,4-galactanase A (356 aa).

The N-terminal stretch at 1–21 is a signal peptide; that stretch reads MLGKTVLLPLLVLLCHSLASA. Asparagine 133 is a glycosylation site (N-linked (GlcNAc...) asparagine). Glutamate 157 (proton donor) is an active-site residue. The Nucleophile role is filled by glutamate 268.

It belongs to the glycosyl hydrolase 53 family.

Its subcellular location is the secreted. It catalyses the reaction The enzyme specifically hydrolyzes (1-&gt;4)-beta-D-galactosidic linkages in type I arabinogalactans.. Endogalactanase involved in the degradation of plant cell wall polysaccharides, and more particularly of hairy regions of pectin. The chain is Probable arabinogalactan endo-beta-1,4-galactanase A (galA) from Aspergillus fumigatus (strain ATCC MYA-4609 / CBS 101355 / FGSC A1100 / Af293) (Neosartorya fumigata).